We begin with the raw amino-acid sequence, 192 residues long: ADP-ribosylation factor-like protein 14 (192 aa).

Glycine 2 carries N-myristoyl glycine lipidation. Residues 20 to 27 (GLDSAGKS), 64 to 68 (DVGGQ), and 123 to 126 (NKQD) each bind GTP.

It belongs to the small GTPase superfamily. Arf family. As to quaternary structure, interacts with ARL14EP. As to expression, expressed in immature dendritic cells.

Its subcellular location is the cytoplasmic vesicle. Functionally, GTPase that recruits MYO1E to MHC class II-containing vesicles via the effector protein ARL14EP and hence controls the movement of these vesicles along the actin cytoskeleton in dendritic cells. This is ADP-ribosylation factor-like protein 14 (ARL14) from Homo sapiens (Human).